The primary structure comprises 323 residues: MKQYLDLVQSILDQGAWQENRTGVRTLSLPGAALRFDLQQGFPAVTTKKLAFKSAIGEMVGFLRATRSAAQFRALGCKVWDQNANENEQWLANPYREGPDDLGPVYGVQWRHWPAYKLLPRSAGGQVADALARGYRQVAEVAENGAPHVLLYKAVDQLRQCLDTIHQSPGDRRILFHGWNWAQIEEMALPPCHLLYQFLPNAGTREISLCLYIRSNDVGLGTPFNLTEGAALLHLVGRLTGYKPRWFSYFIGDAHVYENHLPMLREQLTREPYPAPQLVLSDRIPDFAVTGKYEPQWLEQVEPGDFTLSGYQHHAPLTAPMAV.

Residues arginine 21 and 172 to 173 contribute to the dUMP site; that span reads RR. Cysteine 192 acts as the Nucleophile in catalysis. DUMP contacts are provided by residues 214–217, asparagine 225, and 255–257; these read RSND and HVY. Residue aspartate 217 participates in (6R)-5,10-methylene-5,6,7,8-tetrahydrofolate binding. Residue alanine 322 coordinates (6R)-5,10-methylene-5,6,7,8-tetrahydrofolate.

Belongs to the thymidylate synthase family. Bacterial-type ThyA subfamily. As to quaternary structure, homodimer.

It is found in the cytoplasm. It carries out the reaction dUMP + (6R)-5,10-methylene-5,6,7,8-tetrahydrofolate = 7,8-dihydrofolate + dTMP. It functions in the pathway pyrimidine metabolism; dTTP biosynthesis. In terms of biological role, catalyzes the reductive methylation of 2'-deoxyuridine-5'-monophosphate (dUMP) to 2'-deoxythymidine-5'-monophosphate (dTMP) while utilizing 5,10-methylenetetrahydrofolate (mTHF) as the methyl donor and reductant in the reaction, yielding dihydrofolate (DHF) as a by-product. This enzymatic reaction provides an intracellular de novo source of dTMP, an essential precursor for DNA biosynthesis. In Bordetella parapertussis (strain 12822 / ATCC BAA-587 / NCTC 13253), this protein is Thymidylate synthase.